We begin with the raw amino-acid sequence, 157 residues long: Cell cycle control protein 50C (157 aa).

Residues M1–R34 are Cytoplasmic-facing. Residues V35–L55 traverse the membrane as a helical segment. The Extracellular portion of the chain corresponds to S56–V157. N-linked (GlcNAc...) asparagine glycosylation occurs at N66.

This sequence belongs to the CDC50/LEM3 family.

The protein resides in the membrane. The chain is Cell cycle control protein 50C (TMEM30C) from Pan troglodytes (Chimpanzee).